Consider the following 353-residue polypeptide: DNA replication and repair protein RecF (353 aa).

Residue 30–37 coordinates ATP; the sequence is GANGQGKT.

Belongs to the RecF family.

The protein resides in the cytoplasm. Its function is as follows. The RecF protein is involved in DNA metabolism; it is required for DNA replication and normal SOS inducibility. RecF binds preferentially to single-stranded, linear DNA. It also seems to bind ATP. The sequence is that of DNA replication and repair protein RecF from Carboxydothermus hydrogenoformans (strain ATCC BAA-161 / DSM 6008 / Z-2901).